We begin with the raw amino-acid sequence, 716 residues long: Lamin-like protein (716 aa).

2 stretches are compositionally biased toward basic residues: residues 1 to 10 (MDMSKKKSKR) and 35 to 45 (KKTKTTTKKKA). Residues 1–107 (MDMSKKKSKR…TIQSIPTTPI (107 aa)) are disordered. A compositionally biased stretch (low complexity) spans 62–107 (ITTTTTSTSTTNNNNITTTSTSSQQSNGTLSSSSSPTIQSIPTTPI). The stretch at 130–450 (LREKDELSLI…KMRKQMADLK (321 aa)) forms a coiled coil. Residues 132-515 (EKDELSLIHN…ELVKGFEKTV (384 aa)) form the IF rod domain. The short motif at 519–522 (KRKR) is the Nuclear localization signal element. A disordered region spans residues 519-584 (KRKRSKLQHE…PTGPEQSELF (66 aa)). Over residues 532–545 (AANQDQNGMTIEEQ) the composition is skewed to polar residues. Positions 546–564 (SSTSTTTTTSATGSSSSTS) are enriched in low complexity. Polar residues predominate over residues 565–584 (HLDNIDSSKLPTGPEQSELF). The LTD domain maps to 575 to 698 (PTGPEQSELF…EETTTVTLPA (124 aa)). The CAAX motif motif lies at 713–716 (CLIM).

This sequence belongs to the intermediate filament family. As to quaternary structure, homodimer. Lamin dimers then assemble into dimeric head-to-tail polymers. Ultimately, two head-to-tail polymers assemble laterally into a protofilament with a uniformly shaped rod of 3.5 nm in diameter.

Its subcellular location is the nucleus lamina. The protein resides in the nucleus envelope. It localises to the nucleus inner membrane. Lamins are intermediate filament proteins that assemble into a filamentous meshwork, and which constitute the major components of the nuclear lamina, a fibrous layer on the nucleoplasmic side of the inner nuclear membrane. Lamins provide a framework for the nuclear envelope, bridging the nuclear envelope and chromatin, thereby playing an important role in nuclear assembly, chromatin organization, nuclear membrane and telomere dynamics. The structural integrity of the lamina is strictly controlled by the cell cycle, as seen by the disintegration and formation of the nuclear envelope in prophase and telophase, respectively. Helps to maintain integrity of nuclear structures in response to mechanical stress. The chain is Lamin-like protein from Dictyostelium discoideum (Social amoeba).